Reading from the N-terminus, the 102-residue chain is MYAIIKTGGKQVKVEAGQEIYVEKLNADVDSTVEFGEVLILGGDDVKVGAPLVEGAKVVATVIKHARAKKITVFKMKAKKNYRRKQGHRQPYTKVRIEKIEA.

This sequence belongs to the bacterial ribosomal protein bL21 family. As to quaternary structure, part of the 50S ribosomal subunit. Contacts protein L20.

This protein binds to 23S rRNA in the presence of protein L20. This chain is Large ribosomal subunit protein bL21, found in Exiguobacterium sibiricum (strain DSM 17290 / CCUG 55495 / CIP 109462 / JCM 13490 / 255-15).